The following is an 871-amino-acid chain: MASQRFVIALHSFPGKSSDELPLVEGRKYLLIKMDEEFGDGWWEGEDEQGNRGIFPASHVELISDERSDSSDSRRGKEDFSISTAEVTRSSLSSSRSTSSRSDKDSEKLYSNNSLSSSHSSILNGPLDSLSKPSVPSNFNSMFPSSKQEGPSPLLDNQPSSDLSNFNTIDADYNNASASTSAPATSASLKKVLSAEDSVRETITDIETALQNMSTSASRTPNDSSPLPYIENRPASSLAVSEKIQNVPNWSTEEVVEWLMNAGLGSVAPNFAENEITGEILLGLDSNVLKELNITSFGKRFEVLRKIQQLKDSYEQSLYEEYPQFAEPISVSQSSDSSSSIPKKSNDEAGGSPSKSSPTRPGFNDYVNRPTSVMPSLSNMIVSPDLDSSPSTDWNQYVIPPLATPSSRNSKSTQSAVPENVSRFDSNEPSATSPILKRSSPTDSISQNSGLPSRLTEPISSPSTSSIDVDKEGTSFPGLPYHSSKGNLYAPQPSSNVPTKFTGGASESSSVPPRPIPSAMKGKAPASAISIEALEELDPPKITTIDGESPSSISSRLPSSNLEQGSSSSVTKSPESMPDPSAKASSPVTSKGVSINEKSAVNNYATPLSKPQPKDTKGSKLGNTFVAPSPAASLPASPPVGTELKTRPTLRSVASSPLNKEPIGKRKSKRDIFGRQKVLPTGISEGLSNIPAKEAIKTADCHGWMRKRSDRYGVWKSRYFVLKGTRLSYYHSLNDASEKGLIDMTSHRVTKTDDIVLSGGKTAIKLIPPAPGAAKAAVMFTPPKVHYFTCENNEELHRWSSAFLKATVERDMSVPVLTTSRMPTISLSKAKELRTRPPSLLIDDENEANLTSSIGLKKNAKQKNKKSSKQK.

An SH3 domain is found at 2–65; sequence ASQRFVIALH…PASHVELISD (64 aa). Residues 42–168 form a disordered region; that stretch reads WWEGEDEQGN…PSSDLSNFNT (127 aa). Over residues 62–80 the composition is skewed to basic and acidic residues; it reads LISDERSDSSDSRRGKEDF. Composition is skewed to low complexity over residues 88-100 and 109-124; these read TRSS…STSS and LYSN…SILN. Polar residues predominate over residues 131-168; it reads SKPSVPSNFNSMFPSSKQEGPSPLLDNQPSSDLSNFNT. Ser224 and Ser225 each carry phosphoserine. At Tyr229 the chain carries Phosphotyrosine. Ser241 carries the post-translational modification Phosphoserine. The region spanning 250-313 is the SAM domain; the sequence is WSTEEVVEWL…LRKIQQLKDS (64 aa). Residues 329–343 are compositionally biased toward low complexity; it reads ISVSQSSDSSSSIPK. 2 disordered regions span residues 329–371 and 384–670; these read ISVS…NRPT and PDLD…KSKR. Composition is skewed to polar residues over residues 384–395 and 404–451; these read PDLDSSPSTDWN and TPSS…NSGL. 3 positions are modified to phosphoserine: Ser433, Ser439, and Ser440. Position 442 is a phosphothreonine (Thr442). Ser444 carries the post-translational modification Phosphoserine. Low complexity predominate over residues 456 to 467; sequence TEPISSPSTSSI. The span at 492–511 shows a compositional bias: polar residues; the sequence is QPSSNVPTKFTGGASESSSV. Ser549 carries the phosphoserine modification. A compositionally biased stretch (low complexity) spans 549-560; that stretch reads SPSSISSRLPSS. Polar residues-rich tracts occupy residues 561-574 and 583-606; these read NLEQ…TKSP and KASS…NYAT. Residues 698–808 enclose the PH domain; sequence TADCHGWMRK…WSSAFLKATV (111 aa).

The protein localises to the cytoplasm. It is found in the membrane. Has a role in cell elongation and separation. The chain is Protein pob1 (pob1) from Schizosaccharomyces pombe (strain 972 / ATCC 24843) (Fission yeast).